The following is a 1184-amino-acid chain: MDPKDESAHVWPTSADHEQSTAQVHFVPDAGTVAQIVYTDDQVRPPQQVVYTADGASYTSVDGPEHTLVYIHPVEAAQTLFTDPAQVAYVQQDATAQQVLPSIESVHGSDPLATLQNPIARLDAKEEEEEEEDEDEDTEEEEEEDAEDTDVDDWQPDPPRPFDPHDLWCEECNNAHSSVCPKHGPLHPIPNRPVLTRARASLPLVLYIDRFLGGVFSKRRIPKRTQFGPVEGPLVRGSELKDCYIHLKVSLDKGDRKDRDLHEDLWFELSDETLCNWMMFVRPAQNHLEQNLVAYQYGHHVYYTTIKNVEPKQELKVWYAASYAEFVNQKIHDISEEERKVLREQEKNWPCYECNRRFISSEQLQQHLNSHDEKLDVFTRTRGRGRGRGKRRFGPGRRPGRPPKFIRLEITSENGEKSDDGTQDLLHFPTKEQFDEAEPATLNGLDQPEQASIPIPQLPQETPPSLEQEPETHTLHLQPQQEESLVPTQTTLTADDMRRAKRIRNAALQHLFIRKSFRPFKCLQCGKAFREKDKLDQHLRFHGREGNCPLTCDLCNKGFISSASLESHMKLHSDQKTYSCIFCPESFDRLDLLKDHVAIHVNDGCFTCPTCKKRFPDFIQVKKHVRSFHSEKIYQCTECDKAFCRPDKLRLHMLRHSDRKDFLCSTCGKQFKRKDKLREHMQRMHNPEREAKKADRISRSKTFKPRITSTDYDSFTFKCRLCMMGFRRRGMLVNHLSKRHPDMKIEEVPELTLPIIKPNRDYFCQYCDKNEMSYFALSKKVALYIAFMVKYLTLQVYKSASKRKAHILKNHPGAELPPSIRKLRPAGPGEPDPMLSTHTQLTGTIATPPVCCPHCSKQYSSKTKMVQHIRKKHPEYAQLPNTIHTPLTTAVISATPAVLTTDSATGETVVTTDLLTQAMTELSQTLTTDYRTPQGDYQRIQYIPVSQSASGLQQPQHIQLQVVQVAPATSPHQSQQSTVDVGQLHDPQTYTQHAIQVQHIQVTEPAPAAPSASQVAGQPLSPSAQQVQQGLSPSHIQGSSSTQGQALQQQQNSSVQHTYLPNAWNSFRGYSAVSAGDTSHESASEIQMMTLPPGQFVITDSGVATPVTSGQVKAVTPGHYVLSESQPELEEKQASALSGAVQVQPSAHSDSLDSTGPSQQQTTQYIITTTTNGNGGSEVHITKP.

Residues 122 to 162 (LDAKEEEEEEEDEDEDTEEEEEEDAEDTDVDDWQPDPPRPF) form a disordered region. Over residues 125–155 (KEEEEEEEDEDEDTEEEEEEDAEDTDVDDWQ) the composition is skewed to acidic residues. Positions 202–320 (LPLVLYIDRF…PKQELKVWYA (119 aa)) constitute an SET domain. Positions 221–325 (IPKRTQFGPV…KVWYAASYAE (105 aa)) are N-terminal PR domain; essential for transcriptional activator activity. The C2H2-type 1 zinc finger occupies 349-371 (WPCYECNRRFISSEQLQQHLNSH). Lys-374 is covalently cross-linked (Glycyl lysine isopeptide (Lys-Gly) (interchain with G-Cter in SUMO2)). A compositionally biased stretch (basic residues) spans 381–401 (TRGRGRGRGKRRFGPGRRPGR). The interval 381–405 (TRGRGRGRGKRRFGPGRRPGRPPKF) is disordered. Position 418 is a phosphoserine (Ser-418). Thr-422 is subject to Phosphothreonine. The disordered stretch occupies residues 444 to 487 (GLDQPEQASIPIPQLPQETPPSLEQEPETHTLHLQPQQEESLVP). Polar residues predominate over residues 475–487 (LHLQPQQEESLVP). 8 consecutive C2H2-type zinc fingers follow at residues 520-542 (FKCL…LRFH), 550-572 (LTCD…MKLH), 578-600 (YSCI…VAIH), 606-629 (FTCP…RSFH), 634-656 (YQCT…MLRH), 662-685 (FLCS…QRMH), 717-740 (FKCR…SKRH), and 850-873 (VCCP…RKKH). The segment at 917–1164 (QAMTELSQTL…TGPSQQQTTQ (248 aa)) is C-terminal glutamine-rich region; essential for transcriptional activator activity. The tract at residues 1004-1054 (EPAPAAPSASQVAGQPLSPSAQQVQQGLSPSHIQGSSSTQGQALQQQQNSS) is disordered. The span at 1014 to 1036 (QVAGQPLSPSAQQVQQGLSPSHI) shows a compositional bias: polar residues. The segment covering 1037–1054 (QGSSSTQGQALQQQQNSS) has biased composition (low complexity).

It belongs to the class V-like SAM-binding methyltransferase superfamily. As to expression, present in brain, liver, kidney, spleen and thymus (at protein level).

The protein resides in the nucleus. Functionally, transcriptional activator, essential for early embryonic development and survival of embryonic stem cells (ESCs). Supports cell growth and survival during early development by transcriptionally activating the expression of the translation initiation factor EIF3B, to sustain global translation. Activates the transcription of FLNC. The sequence is that of PR domain zinc finger protein 10 (Prdm10) from Mus musculus (Mouse).